Consider the following 163-residue polypeptide: Cytosolic iron-sulfur assembly component 2B (163 aa).

It belongs to the MIP18 family.

The protein resides in the nucleus. Its subcellular location is the cytoplasm. The protein localises to the cytoskeleton. It localises to the spindle. Functionally, component of the cytosolic iron-sulfur (Fe/S) protein assembly machinery. Required for the maturation of extramitochondrial Fe/S proteins. May play a role in chromosome segregation through establishment of sister chromatid cohesion. This chain is Cytosolic iron-sulfur assembly component 2B, found in Dictyostelium discoideum (Social amoeba).